A 201-amino-acid chain; its full sequence is ATP-dependent Clp protease proteolytic subunit 2 (201 aa).

The active-site Nucleophile is Ser-101. Residue His-126 is part of the active site.

This sequence belongs to the peptidase S14 family. In terms of assembly, fourteen ClpP subunits assemble into 2 heptameric rings which stack back to back to give a disk-like structure with a central cavity, resembling the structure of eukaryotic proteasomes.

The protein resides in the cytoplasm. It carries out the reaction Hydrolysis of proteins to small peptides in the presence of ATP and magnesium. alpha-casein is the usual test substrate. In the absence of ATP, only oligopeptides shorter than five residues are hydrolyzed (such as succinyl-Leu-Tyr-|-NHMec, and Leu-Tyr-Leu-|-Tyr-Trp, in which cleavage of the -Tyr-|-Leu- and -Tyr-|-Trp bonds also occurs).. In terms of biological role, cleaves peptides in various proteins in a process that requires ATP hydrolysis. Has a chymotrypsin-like activity. Plays a major role in the degradation of misfolded proteins. In Prochlorococcus marinus subsp. pastoris (strain CCMP1986 / NIES-2087 / MED4), this protein is ATP-dependent Clp protease proteolytic subunit 2.